A 131-amino-acid chain; its full sequence is Large ribosomal subunit protein bL17 (131 aa).

This sequence belongs to the bacterial ribosomal protein bL17 family. In terms of assembly, part of the 50S ribosomal subunit. Contacts protein L32.

This is Large ribosomal subunit protein bL17 from Methylacidiphilum infernorum (isolate V4) (Methylokorus infernorum (strain V4)).